The following is a 226-amino-acid chain: Ribonuclease 3 (226 aa).

The RNase III domain occupies 6–128 (INRLQRKLGY…LIGGIFLDSD (123 aa)). Position 41 (glutamate 41) interacts with Mg(2+). The active site involves aspartate 45. Residues aspartate 114 and glutamate 117 each coordinate Mg(2+). Glutamate 117 is a catalytic residue. Positions 155–225 (DPKTRLQEFL…AEQALKQLEL (71 aa)) constitute a DRBM domain.

It belongs to the ribonuclease III family. As to quaternary structure, homodimer. Mg(2+) serves as cofactor.

The protein localises to the cytoplasm. It catalyses the reaction Endonucleolytic cleavage to 5'-phosphomonoester.. Its function is as follows. Digests double-stranded RNA. Involved in the processing of primary rRNA transcript to yield the immediate precursors to the large and small rRNAs (23S and 16S). Processes some mRNAs, and tRNAs when they are encoded in the rRNA operon. Processes pre-crRNA and tracrRNA of type II CRISPR loci if present in the organism. The polypeptide is Ribonuclease 3 (Edwardsiella ictaluri (strain 93-146)).